A 1221-amino-acid chain; its full sequence is Probable serine/threonine-protein kinase DDB_G0286465 (1221 aa).

Disordered stretches follow at residues 1–37, 104–133, and 173–263; these read MTLR…SPYT, FSPS…NDNQ, and ENNS…NNNE. Composition is skewed to low complexity over residues 24–37, 112–127, 173–192, and 204–263; these read SSVS…SPYT, KNNN…NNNY, ENNS…NMQK, and NNNN…NNNE. In terms of domain architecture, Protein kinase spans 186-627; that stretch reads INNNMQKTGG…PYKLLDHPFF (442 aa). 192-200 contacts ATP; the sequence is KTGGRNGSV. Lys-271 serves as a coordination point for ATP. Residues 324-344 are compositionally biased toward low complexity; it reads NVNNNNSNNNNNNSNNNITNS. Residues 324–346 are disordered; that stretch reads NVNNNNSNNNNNNSNNNITNSRY. Asp-448 functions as the Proton acceptor in the catalytic mechanism. Composition is skewed to low complexity over residues 538-550 and 559-584; these read SPSS…TSTS and DSSS…SLPK. 5 disordered regions span residues 538 to 604, 712 to 782, 823 to 858, 959 to 1008, and 1105 to 1152; these read SPSS…PEKR, PNLS…KEKL, KFEK…PPLP, KENI…SYCN, and KKQE…QQEK. Residues 591–604 are compositionally biased toward basic and acidic residues; that stretch reads RSKDNQSKLDPEKR. Over residues 725 to 738 the composition is skewed to low complexity; it reads KKQLQQYQQQQKQQ. Residues 746-756 show a composition bias toward acidic residues; the sequence is DDEEEKEEEEK. Composition is skewed to basic and acidic residues over residues 757–769 and 823–850; these read EKEK…KEKE and KFEK…KDDA. The segment covering 959-993 has biased composition (low complexity); the sequence is KENIINFHNNNNNNNNNNNNNNNNNNNNNNNNNNN.

The protein belongs to the protein kinase superfamily. Ser/Thr protein kinase family.

It carries out the reaction L-seryl-[protein] + ATP = O-phospho-L-seryl-[protein] + ADP + H(+). The enzyme catalyses L-threonyl-[protein] + ATP = O-phospho-L-threonyl-[protein] + ADP + H(+). The sequence is that of Probable serine/threonine-protein kinase DDB_G0286465 from Dictyostelium discoideum (Social amoeba).